A 145-amino-acid chain; its full sequence is Large ribosomal subunit protein uL13 (145 aa).

This sequence belongs to the universal ribosomal protein uL13 family. As to quaternary structure, part of the 50S ribosomal subunit.

In terms of biological role, this protein is one of the early assembly proteins of the 50S ribosomal subunit, although it is not seen to bind rRNA by itself. It is important during the early stages of 50S assembly. In Exiguobacterium sibiricum (strain DSM 17290 / CCUG 55495 / CIP 109462 / JCM 13490 / 255-15), this protein is Large ribosomal subunit protein uL13.